The chain runs to 435 residues: Diguanylate cyclase TpbB (435 aa).

Residues 1 to 22 (MNRRRRYTGSNPSLRRVLYRAH) lie on the Cytoplasmic side of the membrane. Residues 23–43 (LGVALVAVFTAGLAVTLVGLL) traverse the membrane as a helical segment. Over 44–154 (TLRAYADPNQ…VKGSGGSLLR (111 aa)) the chain is Periplasmic. The helical transmembrane segment at 155 to 175 (FLLTGFAGMVLCLLLTALGAF) threads the bilayer. Topologically, residues 176–435 (YLSRRLVRGI…DSATPEAPPK (260 aa)) are cytoplasmic. Residues 183 to 236 (RGIVGPLDQLAKVAHTVRRERDFEKRVPEAGIAELSQLGEDFNALLDELESWQA) enclose the HAMP domain. A GGDEF domain is found at 279–415 (EQLAVLFIDS…GSRRLAELND (137 aa)). Residues S288 and D330 each contribute to the Mg(2+) site. Residue D330 is the Proton acceptor of the active site. Residues 413–426 (LNDPRILQEEKEID) show a composition bias toward basic and acidic residues. A disordered region spans residues 413–435 (LNDPRILQEEKEIDSATPEAPPK).

As to quaternary structure, homodimer. Interacts with YfiR. It depends on Mg(2+) as a cofactor. Post-translationally, phosphorylated at both Tyr residues and Ser/Thr residues. Dephosphorylated and inactivated by TpbA.

The protein resides in the cell inner membrane. The catalysed reaction is 2 GTP = 3',3'-c-di-GMP + 2 diphosphate. It functions in the pathway purine metabolism; 3',5'-cyclic di-GMP biosynthesis. Activity is tightly controlled by YfiR, a small periplasmic protein, and the OmpA/Pal-like outer-membrane lipoprotein YfiB. Diguanylate cyclase activity is inhibited by the specific interaction of YfiR with the TpbB periplasmic domain and is activated by YfiB, which releases the YfiR-mediated repression through sequestration of YfiR to the outer membrane. Release of repression leads to a conformational shift in TpbB/YfiN that propagates through the PAS and transmembrane domains to switch the cytoplasmic HAMP domain from an inactive to an active conformation and activate the C-terminal catalytic GGDEF domain. Thus, TpbB/YfiN appears to function by switching between discrete inactive and active functional states depending on the presence or absence of bound YfiR. Activity is also controlled by dephosphorylation of the periplasmic domain by the tyrosine phosphatase TpbA. These two mechanisms of regulation could in principle work in parallel or as part of the same regulatory pathway. Does not undergo product feedback inhibition. Its function is as follows. Catalyzes the synthesis of cyclic-di-GMP (c-di-GMP) via the condensation of 2 GTP molecules. Functionally, part of the YfiB-TpbB-YfiR (or yfiBNR) system, encoding a tripartite signaling module that modulates intracellular c-di-GMP levels. The system is a key regulator of the small colony variant (SCV) phenotype, and plays an important role in biofilm formation and in vivo persistence. The c-di-GMP produced by TpbB/YfiN stimulates the production of the Pel and Psl exopolysaccharides, which promotes surface attachment, generates an SCV phenotype and confers resistance against phagocytosis. The polypeptide is Diguanylate cyclase TpbB (Pseudomonas aeruginosa (strain ATCC 15692 / DSM 22644 / CIP 104116 / JCM 14847 / LMG 12228 / 1C / PRS 101 / PAO1)).